We begin with the raw amino-acid sequence, 1364 residues long: Kinectin (1364 aa).

Residues 1–6 lie on the Cytoplasmic side of the membrane; that stretch reads MEFYES. Residues 7-29 traverse the membrane as a helical; Signal-anchor for type II membrane protein segment; the sequence is TYFIILIPSVVITVIFLFFWLFM. The Lumenal portion of the chain corresponds to 30–1364; the sequence is KETLYDEVLA…KGREHYQLVE (1335 aa). 4 stretches are compositionally biased toward basic and acidic residues: residues 46 to 56, 73 to 86, 121 to 135, and 170 to 179; these read KFPPTKSDKKK, HESDSESTPRDFKL, QKAAQDDHVTKESEG, and QKNDDQDTKT. Residues 46-207 form a disordered region; the sequence is KFPPTKSDKK…VKQENVSGKK (162 aa). N-linked (GlcNAc...) asparagine glycosylation is found at N202, N267, N623, N638, N704, N775, N976, N1061, N1088, and N1094. Positions 315–1085 form a coiled coil; the sequence is KASKAESAAA…VETRELLQKL (771 aa). Positions 1116–1306 form a coiled coil; sequence SGSEDIKVME…ASLEREIGKV (191 aa).

This sequence belongs to the kinectin family. In terms of assembly, parallel homodimers formed between the membrane-bound and the cytosolic form, and also between 2 cytosolic forms. In terms of processing, both the membrane and cytoplasmic forms seem to be myristoylated.

It is found in the endoplasmic reticulum membrane. In terms of biological role, receptor for kinesin thus involved in kinesin-driven vesicle motility. The chain is Kinectin (KTN1) from Gallus gallus (Chicken).